Consider the following 131-residue polypeptide: Protein yippee-like PJ691.02 (131 aa).

One can recognise a Yippee domain in the interval 12-109 (RCYVCAKCKT…LEMQDAVLQR (98 aa)). Zn(2+) contacts are provided by cysteine 16, cysteine 19, cysteine 72, and cysteine 75.

Belongs to the yippee family.

This chain is Protein yippee-like PJ691.02, found in Schizosaccharomyces pombe (strain 972 / ATCC 24843) (Fission yeast).